Consider the following 592-residue polypeptide: 3-hydroxy-3-methylglutaryl-coenzyme A reductase 1 (592 aa).

The tract at residues 1 to 45 (MDLRRRPPKPPVTNNNNSNGSFRSYQPRTSDDDHRRRATTIAPPP) is disordered. Residues 12–28 (VTNNNNSNGSFRSYQPR) show a composition bias toward polar residues. Residues Asn-16 and Asn-19 are each glycosylated (N-linked (GlcNAc...) asparagine). Transmembrane regions (helical) follow at residues 47–69 (ASDA…FFSV) and 97–117 (AIIA…IDFV). The interval 118 to 171 (QSFISRASGDAWDLADTIDDDDHRLVTCSPPTPIVSVAKLPNPEPIVTESLPEE) is linker. The segment at 172 to 592 (DEEIVKSVID…GATTTTTTTT (421 aa)) is catalytic. Glu-265 serves as the catalytic Charge relay system. A glycan (N-linked (GlcNAc...) asparagine) is linked at Asn-329. Residues Lys-397 and Asp-473 each act as charge relay system in the active site. Catalysis depends on His-571, which acts as the Proton donor. N-linked (GlcNAc...) asparagine glycosylation is present at Asn-575. A Phosphoserine modification is found at Ser-577.

It belongs to the HMG-CoA reductase family. Interacts (via N-terminus) with B''ALPHA and B''BETA. Post-translationally, inactivated by phosphorylation at Ser-577 by KIN10 activated form. Probably also phosphorylated at additional sites. As to expression, found in all tissues. Isoform Short is expressed at low levels specifically in flowers. Expressed in both the tapetum and microspores.

It localises to the endoplasmic reticulum membrane. It carries out the reaction (R)-mevalonate + 2 NADP(+) + CoA = (3S)-3-hydroxy-3-methylglutaryl-CoA + 2 NADPH + 2 H(+). It functions in the pathway metabolic intermediate biosynthesis; (R)-mevalonate biosynthesis; (R)-mevalonate from acetyl-CoA: step 3/3. With respect to regulation, regulated at the post-translational level in response to alterations of sphingolipid and sterol biosynthetic pathways. Negatively regulated by a PP2A-dependent dephosphorylation occurring at a site different than Ser-577. Completely inhibited by mevinolin (IC(50) = 12.5 nM). Reversibly inactivated by phosphorylation at Ser-577 by spinach or Brassica oleracea HMGR kinases in a cell-free system. Down-regulated by KIN10 through its phosphorylation at Ser-577. Catalyzes the synthesis of mevalonate, the specific precursor of all isoprenoid compounds present in plants. This Arabidopsis thaliana (Mouse-ear cress) protein is 3-hydroxy-3-methylglutaryl-coenzyme A reductase 1.